Consider the following 334-residue polypeptide: MTKIGINGFGRIGRNVFRAALNNSEVEVVAINDLTDAKTLAHLLKYDTVHGTLNAEVSANENSIVVNGKEIKVIAERDPAQLPWSDYGVEVVVESTGRFTKKSDAEKHLGGSVKKVIISAPASDEDITVVMGVNHEQYDAANHNVVSNASCTTNCLAPFAKVLNEKFGVKRGMMTTIHSYTNDQQILDLPHKDLRRARAAAENMIPTSTGAAKAVALVLPELKGKLNGGAVRVPTANVSLVDLVVELDKEVTVEEVNAAFKAAAEGELKGILGYSEEPLVSIDYNGCTASSTIDALSTMVMEGNMVKVLSWYDNETGYSNRVVDLAAYMTSKGL.

NAD(+) contacts are provided by residues 11–12 (RI), D33, R77, and S119. D-glyceraldehyde 3-phosphate is bound by residues 150-152 (SCT) and T181. Catalysis depends on C151, which acts as the Nucleophile. Residue N182 participates in NAD(+) binding. D-glyceraldehyde 3-phosphate contacts are provided by residues R196, 209-210 (TG), and R232. An NAD(+)-binding site is contributed by N314.

It belongs to the glyceraldehyde-3-phosphate dehydrogenase family. Homotetramer.

The protein resides in the cytoplasm. It carries out the reaction D-glyceraldehyde 3-phosphate + phosphate + NAD(+) = (2R)-3-phospho-glyceroyl phosphate + NADH + H(+). It participates in carbohydrate degradation; glycolysis; pyruvate from D-glyceraldehyde 3-phosphate: step 1/5. In terms of biological role, catalyzes the oxidative phosphorylation of glyceraldehyde 3-phosphate (G3P) to 1,3-bisphosphoglycerate (BPG) using the cofactor NAD. The first reaction step involves the formation of a hemiacetal intermediate between G3P and a cysteine residue, and this hemiacetal intermediate is then oxidized to a thioester, with concomitant reduction of NAD to NADH. The reduced NADH is then exchanged with the second NAD, and the thioester is attacked by a nucleophilic inorganic phosphate to produce BPG. The polypeptide is Glyceraldehyde-3-phosphate dehydrogenase 1 (gap1) (Bacillus cereus).